The following is a 2177-amino-acid chain: Brefeldin A-inhibited guanine nucleotide-exchange protein 3 (2177 aa).

The segment covering 282–295 (TSSTSTSLESDSAS) has biased composition (low complexity). Residues 282-301 (TSSTSTSLESDSASPGVSDH) form a disordered region. A Phosphoserine modification is found at S471. The segment covering 511 to 524 (TGQTTLEGELGQTT) has biased composition (polar residues). Disordered stretches follow at residues 511–542 (TGQT…PAIP), 617–636 (AAEK…DNCS), and 1031–1076 (DGAS…LSTA). In terms of domain architecture, SEC7 spans 583–796 (RTRSYGSRYS…EELYHQVLDR (214 aa)). The segment covering 618-627 (AEKDSGRSDV) has biased composition (basic and acidic residues). Phosphoserine occurs at positions 632 and 636. Over residues 1032 to 1047 (GASQPPLTISQPQKAT) the composition is skewed to polar residues. A Phosphoserine modification is found at S1049. Residues 1492–1512 (GPGFGIYAVVHLLLPVMSVWL) traverse the membrane as a helical segment. Disordered regions lie at residues 1848–1877 (STDS…GKEK), 1946–2004 (ESST…RKKE), and 2033–2064 (KQQH…SPLL). The span at 1960–1974 (TPSEDDRSQSREHMG) shows a compositional bias: basic and acidic residues. A Phosphoserine modification is found at S1991. Basic and acidic residues-rich tracts occupy residues 1993–2004 (KVEKKDPSRKKE) and 2043–2052 (KEVKVEKKGE). A phosphoserine mark is found at S2079, S2081, S2095, S2101, and S2103. The tract at residues 2082–2103 (AGPELLRQDKRPRSGSTGSSLS) is disordered.

Interacts with PHB2. Expressed in breast cancer cell lines. Not expressed in normal tissues such as duct, mammary gland, lung, heart, liver, kidnay, bone marrow.

It is found in the cytoplasm. The protein resides in the cytoplasmic vesicle. Its subcellular location is the secretory vesicle. It localises to the secretory vesicle membrane. In terms of biological role, participates in the regulation of systemic glucose homeostasis, where it negatively regulates insulin granule biogenesis in pancreatic islet beta cells. Also regulates glucagon granule production in pancreatic alpha cells. Inhibits nuclear translocation of the transcriptional coregulator PHB2 and may enhance estrogen receptor alpha (ESR1) transcriptional activity in breast cancer cells. This Homo sapiens (Human) protein is Brefeldin A-inhibited guanine nucleotide-exchange protein 3.